The chain runs to 267 residues: 5'-methylthioadenosine nucleosidase (267 aa).

The active-site Proton acceptor is Glu38. Residues Thr116, 199-202 (KDME), and Asp225 contribute to the S-methyl-5'-thioadenosine site. Adenine-binding residues include Lys199 and Asp225. Asp225 serves as the catalytic Proton donor.

Belongs to the PNP/UDP phosphorylase family. MtnN subfamily. In terms of assembly, homodimer. Interacts with CBL3 in a calcium-dependent manner. Expressed in roots, leaves, stems, cauline leaves and flowers.

The catalysed reaction is S-methyl-5'-thioadenosine + H2O = 5-(methylsulfanyl)-D-ribose + adenine. The protein operates within amino-acid biosynthesis; L-methionine biosynthesis via salvage pathway; S-methyl-5-thio-alpha-D-ribose 1-phosphate from S-methyl-5'-thioadenosine (hydrolase route): step 1/2. Inhibited by CBL3 in a calcium-dependent manner. Inhibited by 5'-methylthiotubercidin (MTT) and by formycin A (FMA). Functionally, enzyme of the methionine cycle that catalyzes the irreversible cleavage of the glycosidic bond in 5'-methylthioadenosine (MTA) to adenine and 5'-methylthioribose. Contributes to the maintenance of AdoMet homeostasis and is required to sustain high rates of ethylene synthesis. Inactive towards S-adenosylhomocysteine (SAH/AdoHcy). The polypeptide is 5'-methylthioadenosine nucleosidase (MTN1) (Arabidopsis thaliana (Mouse-ear cress)).